The following is a 263-amino-acid chain: N-acyl homoserine lactonase AttM (263 aa).

Zn(2+) contacts are provided by His-103, His-105, Asp-107, His-108, His-180, Asp-202, and His-247.

This sequence belongs to the metallo-beta-lactamase superfamily. Zn(2+) serves as cofactor.

It carries out the reaction an N-acyl-L-homoserine lactone + H2O = an N-acyl-L-homoserine + H(+). The sequence is that of N-acyl homoserine lactonase AttM (attM) from Rhizobium radiobacter (Agrobacterium tumefaciens).